A 796-amino-acid chain; its full sequence is Exocyst complex component 3 (796 aa).

Residues 87–174 (PQLKEKLREL…GTNTEKEQML (88 aa)) adopt a coiled-coil conformation.

The protein belongs to the SEC6 family. The exocyst complex is composed of sec-3/exoc1, sec-5/exoc2, sec-6/exoc3, sec-8/exoc4, sec-10/exoc5, sec-15/exoc6, exo-70/exoc7 and exo-84/exoc8.

Functionally, component of the exocyst complex involved in the docking of exocytic vesicles with fusion sites on the plasma membrane. The protein is Exocyst complex component 3 (sec-6) of Caenorhabditis elegans.